The following is a 638-amino-acid chain: Threonine--tRNA ligase (638 aa).

A TGS domain is found at 1-61; sequence MPNIKLPDGS…ERDSELAILT (61 aa). The interval 242-533 is catalytic; sequence DHRKLGRQLD…LIEHYAGAMP (292 aa). Residues C333, H384, and H510 each coordinate Zn(2+).

It belongs to the class-II aminoacyl-tRNA synthetase family. As to quaternary structure, homodimer. Zn(2+) serves as cofactor.

The protein localises to the cytoplasm. It carries out the reaction tRNA(Thr) + L-threonine + ATP = L-threonyl-tRNA(Thr) + AMP + diphosphate + H(+). Catalyzes the attachment of threonine to tRNA(Thr) in a two-step reaction: L-threonine is first activated by ATP to form Thr-AMP and then transferred to the acceptor end of tRNA(Thr). Also edits incorrectly charged L-seryl-tRNA(Thr). This is Threonine--tRNA ligase from Azoarcus sp. (strain BH72).